The following is a 49-amino-acid chain: Large ribosomal subunit protein bL33 (49 aa).

Belongs to the bacterial ribosomal protein bL33 family.

This is Large ribosomal subunit protein bL33 from Caldanaerobacter subterraneus subsp. tengcongensis (strain DSM 15242 / JCM 11007 / NBRC 100824 / MB4) (Thermoanaerobacter tengcongensis).